The following is a 302-amino-acid chain: KYLEVLDFNHIDGCCESVSLQSGKEAVENLDTGKDSKKDTSGKGDKPQNSQTGQGSKEQTKIGTVSKDVNVGSKGKEVPRLQKITKKMNLPTVGGKIILSLDHLLEYKPNQVDLFNTRATKTEFESWYSAVKIEYDLNDEQMGVIMNGFMVWCIDNGTSPDVNGVWVMMDGEEQVEYPLKPIVENAKPTLRQIMHHFSDAAEAYIEMRNSESPYMPRYGLLRNLRDRELARYAFDFYEVTSKTPNRAREAIAQMKAAALAGINSRLFGLDGNISTNSENTERHTARDVNQNMHTLLGMGPPQ.

Residues 28–46 (ENLDTGKDSKKDTSGKGDK) show a composition bias toward basic and acidic residues. The interval 28–72 (ENLDTGKDSKKDTSGKGDKPQNSQTGQGSKEQTKIGTVSKDVNVG) is disordered. The segment covering 47–63 (PQNSQTGQGSKEQTKIG) has biased composition (polar residues).

The protein belongs to the potyviridae genome polyprotein family. Genome polyprotein of potyviruses undergoes post-translational proteolytic processing by the main proteinase NIa-pro resulting in the production of at least ten individual proteins. The P1 proteinase and the HC-pro cleave only their respective C-termini autocatalytically. 6K1 is essential for proper proteolytic separation of P3 from CI.

Its subcellular location is the virion. The catalysed reaction is RNA(n) + a ribonucleoside 5'-triphosphate = RNA(n+1) + diphosphate. Its function is as follows. An RNA-dependent RNA polymerase that plays an essential role in the virus replication. In terms of biological role, involved in aphid transmission, cell-to-cell and systemis movement, encapsidation of the viral RNA and in the regulation of viral RNA amplification. This is Genome polyprotein from Watermelon mosaic virus II (isolate Australia).